We begin with the raw amino-acid sequence, 419 residues long: CinA-like protein (419 aa).

This sequence belongs to the CinA family.

In Picosynechococcus sp. (strain ATCC 27264 / PCC 7002 / PR-6) (Agmenellum quadruplicatum), this protein is CinA-like protein.